A 133-amino-acid polypeptide reads, in one-letter code: Small ribosomal subunit protein uS12 (133 aa).

D89 bears the 3-methylthioaspartic acid mark. Positions 103–133 are disordered; sequence DTAGVAGRTQRRSKYGAKRPKPGQAAPAKKK. Over residues 111–123 the composition is skewed to basic residues; that stretch reads TQRRSKYGAKRPK. Over residues 124–133 the composition is skewed to low complexity; it reads PGQAAPAKKK.

Belongs to the universal ribosomal protein uS12 family. Part of the 30S ribosomal subunit. Contacts proteins S8 and S17. May interact with IF1 in the 30S initiation complex.

Its function is as follows. With S4 and S5 plays an important role in translational accuracy. Functionally, interacts with and stabilizes bases of the 16S rRNA that are involved in tRNA selection in the A site and with the mRNA backbone. Located at the interface of the 30S and 50S subunits, it traverses the body of the 30S subunit contacting proteins on the other side and probably holding the rRNA structure together. The combined cluster of proteins S8, S12 and S17 appears to hold together the shoulder and platform of the 30S subunit. In Bacteroides thetaiotaomicron (strain ATCC 29148 / DSM 2079 / JCM 5827 / CCUG 10774 / NCTC 10582 / VPI-5482 / E50), this protein is Small ribosomal subunit protein uS12.